Reading from the N-terminus, the 796-residue chain is DnaJ homolog subfamily C member 10 (796 aa).

The N-terminal stretch at 1–33 (MKHSLNTATSSSSVLKRTILYLVLISLAALVYC) is a signal peptide. The J domain maps to 36-100 (DYYDLLGVSK…DLRKKYDKYG (65 aa)). Residues 131-233 (EIITLDRGEF…ERLVNFAMPY (103 aa)) enclose the Thioredoxin 1 domain. Residues cysteine 159 and cysteine 162 are joined by a disulfide bond. 2 trxb regions span residues 236–351 (STVT…LPDL) and 349–464 (PDLE…PTNF). 3 Thioredoxin domains span residues 455 to 554 (HVIT…IEDL), 558 to 668 (SVVT…ALMY), and 672 to 780 (ASFD…ITKR). A disulfide bridge connects residues cysteine 481 and cysteine 484. A glycan (N-linked (GlcNAc...) asparagine) is linked at asparagine 531. 2 disulfide bridges follow: cysteine 589-cysteine 592 and cysteine 701-cysteine 704. Asparagine 753 carries an N-linked (GlcNAc...) asparagine glycan. The Prevents secretion from ER signature appears at 793 to 796 (KDEL).

Its subcellular location is the endoplasmic reticulum lumen. In terms of biological role, endoplasmic reticulum disulfide reductase involved both in the correct folding of proteins and degradation of misfolded proteins. Required for efficient folding of proteins in the endoplasmic reticulum by catalyzing the removal of non-native disulfide bonds formed during the folding of proteins. Also involved in endoplasmic reticulum-associated degradation (ERAD) by reducing incorrect disulfide bonds in misfolded glycoproteins. The chain is DnaJ homolog subfamily C member 10 (dnajc10) from Xenopus laevis (African clawed frog).